The primary structure comprises 393 residues: Homoserine O-succinyltransferase (393 aa).

Positions 62-372 (NAVLVCHALN…PHGHDAFLLD (311 aa)) constitute an AB hydrolase-1 domain. S168 functions as the Nucleophile in the catalytic mechanism. R238 provides a ligand contact to substrate. Residues D333 and H366 contribute to the active site. D367 is a binding site for substrate.

The protein belongs to the AB hydrolase superfamily. MetX family. In terms of assembly, homodimer.

The protein localises to the cytoplasm. It catalyses the reaction L-homoserine + succinyl-CoA = O-succinyl-L-homoserine + CoA. It functions in the pathway amino-acid biosynthesis; L-methionine biosynthesis via de novo pathway; O-succinyl-L-homoserine from L-homoserine: step 1/1. Functionally, transfers a succinyl group from succinyl-CoA to L-homoserine, forming succinyl-L-homoserine. The chain is Homoserine O-succinyltransferase from Cupriavidus necator (strain ATCC 17699 / DSM 428 / KCTC 22496 / NCIMB 10442 / H16 / Stanier 337) (Ralstonia eutropha).